The primary structure comprises 519 residues: Trichothecene 15-O-acetyltransferase TRI3 (519 aa).

Histidine 414 is a 15-deacetylcalonectrin binding site.

Belongs to the trichothecene O-acetyltransferase family.

Its pathway is sesquiterpene biosynthesis; trichothecene biosynthesis. Its function is as follows. 15-O-acetyltransferase; part of the core gene cluster that mediates the biosynthesis of trichothecenes, a very large family of chemically related bicyclic sesquiterpene compounds acting as mycotoxins, including T2-toxin. The biosynthesis of trichothecenes begins with the cyclization of farnesyl diphosphate to trichodiene and is catalyzed by the trichodiene synthase TRI5. Trichodiene undergoes a series of oxygenations catalyzed by the cytochrome P450 monooxygenase TRI4. TRI4 controls the addition of four oxygens at C-2, C-3, C-11, and the C-12, C-13-epoxide to form the intermediate isotrichotriol. Isotrichotriol then undergoes a non-enzymatic isomerization and cyclization to form isotrichodermol. During this process, the oxygen at the C-2 position becomes the pyran ring oxygen and the hydroxyl group at C-11 is lost. More complex type A trichothecenes are built by modifying isotrichodermol through a series of paired hydroxylation and acetylation or acylation steps. Isotrichodermol is converted to isotrichodermin by the acetyltransferase TRI101. TRI101 encodes a C-3 transacetylase that acts as a self-protection or resistance factor during biosynthesis and that the presence of a free C-3 hydroxyl group is a key component of Fusarium trichothecene phytotoxicity. A second hydroxyl group is added to C-15 by the trichothecene C-15 hydroxylase TRI11, producing 15-decalonectrin, which is then acetylated by TRI3, producing calonectrin. A third hydroxyl group is added at C-4 by the cytochrome P450 monooxygenase TRI13, converting calonectrin to 3,15-diacetoxyspirpenol, which is subsequently acetylated by the acetyltransferase TRI7. A fourth hydroxyl group is added to C-8 by the cytochrome P450 monooxygenase TRI1, followed by the addition of an isovaleryl moiety by TRI16. Finally, the acetyl group is removed from the C-3 position by the trichothecene C-3 esterase TRI8 to produce T-2 toxin. This is Trichothecene 15-O-acetyltransferase TRI3 from Fusarium sporotrichioides.